Reading from the N-terminus, the 139-residue chain is Immunogenic miracidial antigen 8I (139 aa).

The interval 61–139 (IDVGDEDYHD…PKKYGSGYKH (79 aa)) is disordered. The span at 64–85 (GDEDYHDGDDDVDYTDDVDDVD) shows a compositional bias: acidic residues. The segment covering 90–103 (SPSQLLQGGYQRNQ) has biased composition (polar residues).

Belongs to the immunogenic miracidial antigen family.

The sequence is that of Immunogenic miracidial antigen 8I (8I) from Schistosoma japonicum (Blood fluke).